Reading from the N-terminus, the 315-residue chain is Ribosomal RNA small subunit methyltransferase H (315 aa).

S-adenosyl-L-methionine-binding positions include 37–39 (GGH), aspartate 57, phenylalanine 83, aspartate 105, and glutamine 112.

This sequence belongs to the methyltransferase superfamily. RsmH family.

The protein localises to the cytoplasm. It carries out the reaction cytidine(1402) in 16S rRNA + S-adenosyl-L-methionine = N(4)-methylcytidine(1402) in 16S rRNA + S-adenosyl-L-homocysteine + H(+). Functionally, specifically methylates the N4 position of cytidine in position 1402 (C1402) of 16S rRNA. This is Ribosomal RNA small subunit methyltransferase H from Pseudomonas fluorescens (strain Pf0-1).